A 329-amino-acid chain; its full sequence is GMP reductase (329 aa).

Cys-178 functions as the Thioimidate intermediate in the catalytic mechanism. An NADP(+)-binding site is contributed by 207–230; the sequence is IIADGGIRNNGDIAKSIRFGATMC.

The protein belongs to the IMPDH/GMPR family. GuaC type 2 subfamily.

The catalysed reaction is IMP + NH4(+) + NADP(+) = GMP + NADPH + 2 H(+). In terms of biological role, catalyzes the irreversible NADPH-dependent deamination of GMP to IMP. It functions in the conversion of nucleobase, nucleoside and nucleotide derivatives of G to A nucleotides, and in maintaining the intracellular balance of A and G nucleotides. This chain is GMP reductase, found in Lacticaseibacillus paracasei (strain ATCC 334 / BCRC 17002 / CCUG 31169 / CIP 107868 / KCTC 3260 / NRRL B-441) (Lactobacillus paracasei).